Reading from the N-terminus, the 187-residue chain is Elongation factor P (187 aa).

This sequence belongs to the elongation factor P family.

It localises to the cytoplasm. Its pathway is protein biosynthesis; polypeptide chain elongation. Its function is as follows. Involved in peptide bond synthesis. Stimulates efficient translation and peptide-bond synthesis on native or reconstituted 70S ribosomes in vitro. Probably functions indirectly by altering the affinity of the ribosome for aminoacyl-tRNA, thus increasing their reactivity as acceptors for peptidyl transferase. The chain is Elongation factor P (efp) from Helicobacter pylori (strain J99 / ATCC 700824) (Campylobacter pylori J99).